Reading from the N-terminus, the 169-residue chain is Secreted LysM effector Blys5 (169 aa).

The first 19 residues, 1–19 (MKLSVISAVFVSLAAAAAA), serve as a signal peptide directing secretion. LysM domains lie at 47 to 94 (TYYQ…YYCV) and 121 to 167 (QWYK…NVCV).

It belongs to the secreted LysM effector family.

Secreted effector that enables the plant pathogenic fungus to manipulate host defenses for successful infection. Required for the full virulence to infect insect hosts. Protects fungal hyphae against the hydrolytic activity of chitinase and plays an important role in evasion of insect immunities. Binds chitin and can additionally bind chitosan and cellulose. Coats and protects the cell walls of insect pathogens from host cell recognition and additionally shields fungal cells from the hydrolysis of insect chitinases. This is Secreted LysM effector Blys5 from Beauveria bassiana (strain ARSEF 2860) (White muscardine disease fungus).